The chain runs to 937 residues: Protocadherin alpha-7 (937 aa).

A signal peptide spans 1-29 (MVNLRGYNWKSQQLLLFLIIVAAWEAGSG). Residues 30-697 (QLHYSVPEEA…RVDQRLVDVN (668 aa)) are Extracellular-facing. Cadherin domains lie at 34–133 (SVPE…PPMF), 157–242 (ASDA…APVF), 243–350 (DRSL…APQL), 351–455 (TVSS…APLF), 456–565 (AQPE…APTL), and 587–682 (PGQV…SSKV). A disulfide bond links Cys-96 and Cys-102. Thr-223 and Thr-225 each carry an O-linked (Man) threonine glycan. 2 N-linked (GlcNAc...) asparagine glycosylation sites follow: Asn-257 and Asn-265. The O-linked (Man) threonine glycan is linked to Thr-438. Residue Ser-478 is glycosylated (O-linked (Man) serine). Residue Asn-548 is glycosylated (N-linked (GlcNAc...) asparagine). The helical transmembrane segment at 698 to 718 (VYLIIAICAVSSLLVLTLLLY) threads the bilayer. Residues 719 to 937 (TALRCSATPT…GNSTTDNSDQ (219 aa)) lie on the Cytoplasmic side of the membrane. Disordered stretches follow at residues 755-794 (RQRVCSGEGPPKTDLMAFSPSLPQGPSSTDNPRQPNPDWR) and 816-843 (RAGPGGPDQQWPTVSSATPEPEAGEVSP). PXXP repeat units lie at residues 774-777 (PSLP), 786-789 (PRQP), 819-822 (PGGP), 860-863 (PGNP), and 878-881 (PGSP). Positions 774 to 881 (PSLPQGPSST…PDKFIIPGSP (108 aa)) are 5 X 4 AA repeats of P-X-X-P. The segment covering 775 to 787 (SLPQGPSSTDNPR) has biased composition (polar residues). A disordered region spans residues 887 to 937 (RQEPANNQIDKSDFITFGKKEETKKKKKKKKGNKTQEKKEKGNSTTDNSDQ). Basic and acidic residues predominate over residues 896–910 (DKSDFITFGKKEETK).

In terms of assembly, forms homodimers in trans (molecules expressed by two different cells). Forms promiscuous heterodimers in cis (at the plasma membrane of the same cell) with other protocadherins.

The protein resides in the cell membrane. In terms of biological role, calcium-dependent cell-adhesion protein involved in cells self-recognition and non-self discrimination. Thereby, it is involved in the establishment and maintenance of specific neuronal connections in the brain. This chain is Protocadherin alpha-7, found in Mus musculus (Mouse).